The chain runs to 187 residues: Ribosome maturation factor RimM (187 aa).

The PRC barrel domain maps to 96–169 (EDEFFYADLE…KLVIDPTAAG (74 aa)).

This sequence belongs to the RimM family. Binds ribosomal protein uS19.

Its subcellular location is the cytoplasm. In terms of biological role, an accessory protein needed during the final step in the assembly of 30S ribosomal subunit, possibly for assembly of the head region. Essential for efficient processing of 16S rRNA. May be needed both before and after RbfA during the maturation of 16S rRNA. It has affinity for free ribosomal 30S subunits but not for 70S ribosomes. This chain is Ribosome maturation factor RimM, found in Rhizobium meliloti (strain 1021) (Ensifer meliloti).